The primary structure comprises 450 residues: Runt-related transcription factor 1 (450 aa).

The interval 1 to 25 (MRIPVDASTSRRFTPPSTALSPGKM) is disordered. The span at 7–20 (ASTSRRFTPPSTAL) shows a compositional bias: polar residues. Position 14 is a phosphothreonine (threonine 14). Position 21 is a phosphoserine (serine 21). N6-acetyllysine occurs at positions 24 and 43. The Runt domain maps to 50–178 (SMVEVLADHP…TVDGPREPRR (129 aa)). The interaction with DNA stretch occupies residues 80 to 84 (RCNKT). The chloride site is built by asparagine 112, glutamate 116, arginine 139, and valine 170. Interaction with DNA stretches follow at residues 135-143 (RFVGRSGRG) and 168-177 (ITVDGPREPR). Disordered regions lie at residues 170–195 (VDGP…LSFS) and 209–252 (MRVS…SPPW). Serine 193 and serine 212 each carry phosphoserine. Residues 222-247 (PRASLNHSTAFNPQPQSQMQDARQIQ) are compositionally biased toward polar residues. Serine 249 bears the Phosphoserine; by HIPK2 mark. A phosphoserine mark is found at serine 266 and serine 267. Threonine 272 carries the phosphothreonine; by HIPK2 modification. Position 275 is a phosphoserine; by HIPK2 (serine 275). Residues 290–369 (SSRLSTAPDL…SQAQAGPFQT (80 aa)) are interaction with KAT6A. Threonine 295 carries the post-translational modification Phosphothreonine. The interval 306-398 (RQFPTLPSIS…MVGGERSPPR (93 aa)) is interaction with KAT6B. The interval 360 to 400 (SQAQAGPFQTGSPSYHLYYGTSAGSYQFSMVGGERSPPRIL) is interaction with FOXP3. Residues 410 to 450 (AALLNPSLPSQSDVVETEGSHSNSPTNMPPARLEEAVWRPY) are disordered. The span at 416-435 (SLPSQSDVVETEGSHSNSPT) shows a compositional bias: polar residues. Serine 433 bears the Phosphoserine mark. Residues 441 to 450 (RLEEAVWRPY) show a composition bias toward basic and acidic residues.

In terms of assembly, heterodimer with CBFB. RUNX1 binds DNA as a monomer and through the Runt domain. DNA-binding is increased by heterodimerization. Interacts with TLE1 and ALYREF/THOC4. Interacts with ELF1, ELF2 and SPI1. Interacts via its Runt domain with the ELF4 N-terminal region. Interaction with ELF2 isoform 2 (NERF-1a) may act to repress RUNX1-mediated transactivation. Interacts with KAT6A and KAT6B. Interacts with SUV39H1, leading to abrogation of transactivating and DNA-binding properties of RUNX1. Interacts with YAP1 and HIPK2. Interaction with CDK6 prevents myeloid differentiation, reducing its transcription transactivation activity. Found in a complex with PRMT5, RUNX1 and CBFB. Interacts with FOXP3. Interacts with TBX21. Interacts with DPF2. Post-translationally, phosphorylated in its C-terminus upon IL-6 treatment. Phosphorylation enhances interaction with KAT6A. Methylated. In terms of processing, phosphorylated in Ser-249 Thr-272 and Ser-275 by HIPK2 when associated with CBFB and DNA. This phosphorylation promotes subsequent EP300 phosphorylation. As to expression, expressed in skeletal muscle.

Its subcellular location is the nucleus. CBF binds to the core site, 5'-PYGPYGGT-3', of a number of enhancers and promoters, including murine leukemia virus, polyomavirus enhancer, T-cell receptor enhancers, LCK, IL-3 and GM-CSF promoters. The alpha subunit binds DNA and appears to have a role in the development of normal hematopoiesis. Isoform AML-1L interferes with the transactivation activity of RUNX1. Acts synergistically with ELF4 to transactivate the IL-3 promoter and with ELF2 to transactivate the BLK promoter. Inhibits KAT6B-dependent transcriptional activation. Controls the anergy and suppressive function of regulatory T-cells (Treg) by associating with FOXP3. Activates the expression of IL2 and IFNG and down-regulates the expression of TNFRSF18, IL2RA and CTLA4, in conventional T-cells. Positively regulates the expression of RORC in T-helper 17 cells. The polypeptide is Runt-related transcription factor 1 (Runx1) (Rattus norvegicus (Rat)).